The primary structure comprises 172 residues: 2S seed storage-like protein (172 aa).

Residues 1 to 35 (MGVFSPSTTRLTLKWFSLSVALFLLFHWGIPSVDG) form the signal peptide. Residues 108–172 (FMDSDSQEDA…RYSMTGSSFK (65 aa)) are disordered. Residues 151 to 160 (EPPRRCDIQR) show a composition bias toward basic and acidic residues.

Belongs to the 2S seed storage albumins family.

The protein is 2S seed storage-like protein of Picea glauca (White spruce).